The primary structure comprises 127 residues: Large ribosomal subunit protein bL17 (127 aa).

Belongs to the bacterial ribosomal protein bL17 family. Part of the 50S ribosomal subunit. Contacts protein L32.

This is Large ribosomal subunit protein bL17 from Photobacterium profundum (strain SS9).